The sequence spans 148 residues: Cystatin-D (148 aa).

A signal peptide spans 1–33; the sequence is MASLLSPSMPVLAAVALTLTLAVIPEASTNAEA. In terms of domain architecture, Cystatin kininogen-type spans 36–148; it reads VVLGGVEPAD…SMTNFNCYNF (113 aa). 2 cysteine pairs are disulfide-bonded: Cys101–Cys111 and Cys125–Cys145.

It belongs to the cystatin family. As to expression, in cartilage, expressed mainly in mature chondrocytes including prehypertrophic and hypertrophic cells (at protein level). Expressed exclusively in cartilage.

The protein resides in the cytoplasm. The protein localises to the cytosol. Its function is as follows. May play a role in the last steps of the chondrocyte differentiation pathway as an inducer of maturation. Induces chondrocyte calcification during endochondral ossification by playing a role in the transcriptional inhibition of ENPP1, a generator of pyrophosphate which inhibits calcification. Possibly impairs the binding of a transcription factor to the ENPP1 promoter. Unlike other cystatins, does not have thiol protease inhibitor activity. The polypeptide is Cystatin-D (Mus musculus (Mouse)).